We begin with the raw amino-acid sequence, 274 residues long: Merozoite surface protein 2 (274 aa).

The signal sequence occupies residues 1–20 (MKVIKTLSIINFFIFVTFNI). 2 N-linked (GlcNAc...) asparagine glycosylation sites follow: asparagine 22 and asparagine 36. Residues 43–234 (MAESKPPTGT…SDSQKECTDG (192 aa)) are disordered. The tract at residues 44–200 (AESKPPTGTG…EQTESPELQS (157 aa)) is polymorphic region. Tandem repeats lie at residues 53-62 (GASGSAGSGA) and 63-72 (GASGSAGSGD). A 2 X 10 AA tandem repeats of G-A-S-G-S-A-G-S-G-[AD] region spans residues 53-72 (GASGSAGSGAGASGSAGSGD). The segment covering 53–72 (GASGSAGSGAGASGSAGSGD) has biased composition (gly residues). Over residues 91–121 (SSSTPATTTTTTTTTTTTTTNDAEASTSTSS) the composition is skewed to low complexity. 3 stretches are compositionally biased toward polar residues: residues 122 to 131 (ENPNHNNAET), 140 to 167 (QKSN…NVPP), and 174 to 202 (KSPT…QSAP). The N-linked (GlcNAc...) asparagine glycan is linked to asparagine 151. N-linked (GlcNAc...) asparagine glycosylation is present at asparagine 223. An intrachain disulfide couples cysteine 231 to cysteine 239. Asparagine 248 is a glycosylation site (N-linked (GlcNAc...) asparagine). Asparagine 248 carries GPI-anchor amidated asparagine lipidation. Positions 249-274 (SSNIASINKFVVLISAKLVLSFAIFI) are cleaved as a propeptide — removed in mature form.

It localises to the cell membrane. Functionally, may play a role in the merozoite attachment to the erythrocyte. This Plasmodium falciparum (isolate kf1916) protein is Merozoite surface protein 2.